A 633-amino-acid polypeptide reads, in one-letter code: Probable potassium transport system protein Kup 2 (633 aa).

12 helical membrane passes run 18-38 (FLALTIGAIGVVYGDIGTSPL), 61-81 (LVSLVLWTLTAIVTIKYVLFL), 107-127 (PVLMFFAGVLGAALFIGDAMI), 143-163 (VAPALHDYVLPISVVIILLLF), 173-193 (VSVFFGPITLVWFLMMAAAGV), 211-231 (AIGFLWNAGLIGFIVLGAIFL), 255-275 (WFAVVFPALALNYLGQGALVL), 287-307 (LMFPNWALLPMVILATAATII), 345-365 (IYLPLVNTILLTGVLALMLMF), 371-391 (LAPAYGVSITGAMVIDTILAF), 402-422 (ALTAIAVLLPLFNLELVFLGA), and 427-447 (VHHGGYVPILIAGTLITMMWT).

It belongs to the HAK/KUP transporter (TC 2.A.72) family.

The protein resides in the cell inner membrane. It catalyses the reaction K(+)(in) + H(+)(in) = K(+)(out) + H(+)(out). In terms of biological role, transport of potassium into the cell. Likely operates as a K(+):H(+) symporter. The sequence is that of Probable potassium transport system protein Kup 2 from Rhizobium meliloti (strain 1021) (Ensifer meliloti).